Consider the following 133-residue polypeptide: Maturin (133 aa).

Belongs to the MTURN family.

It is found in the cytoplasm. Its function is as follows. May be involved in early neuronal development. May play a role in promoting megakaryocyte differentiation. This Danio rerio (Zebrafish) protein is Maturin (mturn).